We begin with the raw amino-acid sequence, 91 residues long: Large ribosomal subunit protein eL31 (91 aa).

Belongs to the eukaryotic ribosomal protein eL31 family.

The protein is Large ribosomal subunit protein eL31 of Pyrobaculum calidifontis (strain DSM 21063 / JCM 11548 / VA1).